We begin with the raw amino-acid sequence, 151 residues long: UPF0756 membrane protein GK2737 (151 aa).

Transmembrane regions (helical) follow at residues 5–25, 53–73, 79–99, and 121–141; these read VLFLLLLLALGFLAKNKSLIV, WGVTVITIAVLAPIASGEIGF, SLQSLSAWVALASGIFVALIA, and ILAVSLFHGVAVGPLIGAGIA.

It belongs to the UPF0756 family.

It localises to the cell membrane. This Geobacillus kaustophilus (strain HTA426) protein is UPF0756 membrane protein GK2737.